Here is a 75-residue protein sequence, read N- to C-terminus: UPF0346 protein LSL_0716 (75 aa).

Belongs to the UPF0346 family.

This chain is UPF0346 protein LSL_0716, found in Ligilactobacillus salivarius (strain UCC118) (Lactobacillus salivarius).